A 179-amino-acid chain; its full sequence is Ribosome maturation factor RimM (179 aa).

Residues 95–174 (KDEFFYFDIL…QIFCTQDAFL (80 aa)) form the PRC barrel domain.

This sequence belongs to the RimM family. In terms of assembly, binds ribosomal protein uS19.

It is found in the cytoplasm. In terms of biological role, an accessory protein needed during the final step in the assembly of 30S ribosomal subunit, possibly for assembly of the head region. Essential for efficient processing of 16S rRNA. May be needed both before and after RbfA during the maturation of 16S rRNA. It has affinity for free ribosomal 30S subunits but not for 70S ribosomes. The chain is Ribosome maturation factor RimM from Campylobacter jejuni subsp. jejuni serotype O:2 (strain ATCC 700819 / NCTC 11168).